The sequence spans 509 residues: Cobyric acid synthase (509 aa).

A GATase cobBQ-type domain is found at 262 to 459 (EIKVGIIKLP…IHGIFENDSW (198 aa)). Cys343 acts as the Nucleophile in catalysis. His451 is a catalytic residue.

Belongs to the CobB/CobQ family. CobQ subfamily.

Its pathway is cofactor biosynthesis; adenosylcobalamin biosynthesis. Functionally, catalyzes amidations at positions B, D, E, and G on adenosylcobyrinic A,C-diamide. NH(2) groups are provided by glutamine, and one molecule of ATP is hydrogenolyzed for each amidation. The polypeptide is Cobyric acid synthase (Prochlorococcus marinus (strain MIT 9301)).